We begin with the raw amino-acid sequence, 664 residues long: Type IV inositol polyphosphate 5-phosphatase 3 (664 aa).

The disordered stretch occupies residues 35–76 (GRDPEYGADTDNESENEDAREDNDDSSSDEEGGSGSRGRESK). Over residues 40-66 (YGADTDNESENEDAREDNDDSSSDEEG) the composition is skewed to acidic residues. 2 catalytic regions span residues 514–529 (ERII…LSSS) and 592–607 (PKRT…SYGK).

Belongs to the inositol polyphosphate 5-phosphatase family.

The enzyme catalyses a 1,2-diacyl-sn-glycero-3-phospho-(1D-myo-inositol-4,5-bisphosphate) + H2O = a 1,2-diacyl-sn-glycero-3-phospho-(1D-myo-inositol 4-phosphate) + phosphate. It carries out the reaction a 1,2-diacyl-sn-glycero-3-phospho-(1D-myo-inositol-3,4,5-trisphosphate) + H2O = a 1,2-diacyl-sn-glycero-3-phospho-(1D-myo-inositol-3,4-bisphosphate) + phosphate. Its function is as follows. Has phosphatase activity toward PtdIns(4,5)P2 and PtdIns(3,4,5)P3. The protein is Type IV inositol polyphosphate 5-phosphatase 3 of Arabidopsis thaliana (Mouse-ear cress).